A 317-amino-acid chain; its full sequence is tRNA dimethylallyltransferase (317 aa).

An ATP-binding site is contributed by 19-26 (GPTASGKS). 21–26 (TASGKS) contacts substrate. Residues 44-47 (DSMQ) form an interaction with substrate tRNA region.

This sequence belongs to the IPP transferase family. Monomer. Mg(2+) serves as cofactor.

The catalysed reaction is adenosine(37) in tRNA + dimethylallyl diphosphate = N(6)-dimethylallyladenosine(37) in tRNA + diphosphate. Catalyzes the transfer of a dimethylallyl group onto the adenine at position 37 in tRNAs that read codons beginning with uridine, leading to the formation of N6-(dimethylallyl)adenosine (i(6)A). The chain is tRNA dimethylallyltransferase from Methylorubrum extorquens (strain CM4 / NCIMB 13688) (Methylobacterium extorquens).